Reading from the N-terminus, the 64-residue chain is MDARLLEIIVCPICKGPLHYDRAAQELICNADKLAYPIRDGIPVMLVDEARQTVEGTPVDPAGR.

Belongs to the UPF0434 family.

The sequence is that of UPF0434 protein Bcen_1934 from Burkholderia orbicola (strain AU 1054).